Here is a 493-residue protein sequence, read N- to C-terminus: Solute carrier family 2, facilitated glucose transporter member 3 (493 aa).

Residues 1–10 (MGTAKVTPSL) lie on the Cytoplasmic side of the membrane. A helical membrane pass occupies residues 11-32 (VFAVTVATIGSFQFGYNTGVIN). Residues 33-64 (APETIIKDFLNYTLEERLEDLPREGLLTTLWS) are Extracellular-facing. Residue Asn-43 is glycosylated (N-linked (GlcNAc...) asparagine). A helical membrane pass occupies residues 65-85 (LCVAIFSVGGMIGSFSVGLFV). Residues 86–90 (NRFGR) are Cytoplasmic-facing. A helical membrane pass occupies residues 91 to 111 (RNSMLLVNLIAILGGCLMGFA). The Extracellular segment spans residues 112-118 (KIAESVE). A helical transmembrane segment spans residues 119–142 (MLILGRLIIGIFCGLCTGFVPMYI). The Cytoplasmic segment spans residues 143–153 (GEVSPTALRGA). Residues 154 to 174 (FGTLNQLGIVVGILVAQVFGL) traverse the membrane as a helical segment. Residue Gln-159 coordinates D-glucose. The Extracellular portion of the chain corresponds to 175–183 (DFILGSEEL). Residues 184–204 (WPGLLGLTIIPAILQSAALPF) form a helical membrane-spanning segment. Residues 205–269 (CPESPRFLLI…LFKSPSYFQP (65 aa)) lie on the Cytoplasmic side of the membrane. Thr-232 bears the Phosphothreonine mark. A helical membrane pass occupies residues 270 to 290 (LLISVVLQLSQQFSGINAVFY). The important for selectivity against fructose stretch occupies residues 277-279 (QLS). D-glucose is bound by residues 280-281 (QQ) and Asn-286. The Extracellular segment spans residues 291-304 (YSTGIFQDAGVQEP). Residues 305–325 (IYATIGAGVVNTIFTVVSLFL) traverse the membrane as a helical segment. Asn-315 serves as a coordination point for D-glucose. The Cytoplasmic segment spans residues 326–331 (VERAGR). A helical transmembrane segment spans residues 332–352 (RTLHMIGLGGMAVCSVFMTIS). Residues 353-363 (LLLKDEYEAMS) are Extracellular-facing. Residues 364–389 (FVCIVAILVYVAFFEIGPGPIPWFIV) form a helical membrane-spanning segment. Glu-378 and Trp-386 together coordinate D-glucose. Topologically, residues 390 to 399 (AELFSQGPRP) are cytoplasmic. A helical transmembrane segment spans residues 400–420 (AAMAVAGCSNWTSNFLVGMFF). Residues 421-429 (PSAAAYLGA) are Extracellular-facing. Residues 430-450 (YVFIIFAAFLVFFLIFTSFKV) traverse the membrane as a helical segment. The Cytoplasmic portion of the chain corresponds to 451 to 493 (PETKGRTFEDITRAFEGQAHSGKGSAGVELNSMQPVKETPGNA). Phosphoserine occurs at positions 471, 475, and 482. Residue Thr-489 is modified to Phosphothreonine.

It belongs to the major facilitator superfamily. Sugar transporter (TC 2.A.1.1) family. Glucose transporter subfamily. Interacts with SMIM43; the interaction may promote SLC2A3-mediated glucose transport to meet the energy needs of mesendoderm differentiation. As to expression, brain and osteoblastic cells (at protein level). Highly expressed in brain.

It localises to the cell membrane. The protein localises to the perikaryon. The protein resides in the cell projection. The catalysed reaction is D-glucose(out) = D-glucose(in). The enzyme catalyses D-galactose(in) = D-galactose(out). With respect to regulation, deoxyglucose transport is inhibited by D-glucose, D-galactose and maltose. Galactose transport is inhibited by D-glucose and maltose. Its function is as follows. Facilitative glucose transporter. Can also mediate the uptake of various other monosaccharides across the cell membrane. Mediates the uptake of glucose, 2-deoxyglucose, galactose, mannose, xylose and fucose, and probably also dehydroascorbate. Does not mediate fructose transport. Required for mesendoderm differentiation. The polypeptide is Solute carrier family 2, facilitated glucose transporter member 3 (Rattus norvegicus (Rat)).